The sequence spans 351 residues: Protein-glutamate methylesterase/protein-glutamine glutaminase 2 (351 aa).

The region spanning 4–121 (KVLVVDDSAL…PQDFNEYQDL (118 aa)) is the Response regulatory domain. The residue at position 55 (D55) is a 4-aspartylphosphate. One can recognise a CheB-type methylesterase domain in the interval 156 to 348 (RVINTQLVAI…DKMLNYLASL (193 aa)). Residues S168, H194, and D290 contribute to the active site.

The protein belongs to the CheB family. Phosphorylated by CheA. Phosphorylation of the N-terminal regulatory domain activates the methylesterase activity.

It localises to the cytoplasm. The catalysed reaction is [protein]-L-glutamate 5-O-methyl ester + H2O = L-glutamyl-[protein] + methanol + H(+). It catalyses the reaction L-glutaminyl-[protein] + H2O = L-glutamyl-[protein] + NH4(+). Functionally, involved in chemotaxis. Part of a chemotaxis signal transduction system that modulates chemotaxis in response to various stimuli. Catalyzes the demethylation of specific methylglutamate residues introduced into the chemoreceptors (methyl-accepting chemotaxis proteins or MCP) by CheR. Also mediates the irreversible deamidation of specific glutamine residues to glutamic acid. The protein is Protein-glutamate methylesterase/protein-glutamine glutaminase 2 of Shewanella sp. (strain MR-4).